Reading from the N-terminus, the 392-residue chain is 2'-deamino-2'-hydroxyneamine transaminase (392 aa).

Lys249 bears the N6-(pyridoxal phosphate)lysine mark.

This sequence belongs to the class-III pyridoxal-phosphate-dependent aminotransferase family. Pyridoxal 5'-phosphate serves as cofactor.

The catalysed reaction is neamine + 2-oxoglutarate = 6'-oxoparomamine + L-glutamate. It catalyses the reaction 2'-deamino-2'-hydroxyneamine + 2-oxoglutarate = 2'-deamino-2'-hydroxy-6'-dehydroparomamine + L-glutamate. It functions in the pathway antibiotic biosynthesis; kanamycin biosynthesis. Its function is as follows. Aminotransferase that has 6'-oxoglucosaminyl:L-glutamate aminotransferase activity by catalyzing pyridoxal-5'-phosphate-mediated transamination leading to the conversion of paromamine to neamine in the biosynthetic pathway of kanamycin B. This Streptomyces kanamyceticus protein is 2'-deamino-2'-hydroxyneamine transaminase (kacL).